The primary structure comprises 129 residues: Glycine cleavage system H protein (129 aa).

In terms of domain architecture, Lipoyl-binding spans 24–106; sequence HAVVGITDFA…YDGGWLFKLA (83 aa). Position 65 is an N6-lipoyllysine (K65).

It belongs to the GcvH family. The glycine cleavage system is composed of four proteins: P, T, L and H. (R)-lipoate is required as a cofactor.

The glycine cleavage system catalyzes the degradation of glycine. The H protein shuttles the methylamine group of glycine from the P protein to the T protein. This chain is Glycine cleavage system H protein, found in Hydrogenovibrio crunogenus (strain DSM 25203 / XCL-2) (Thiomicrospira crunogena).